The following is an 88-amino-acid chain: Small ribosomal subunit protein bS16c (88 aa).

Belongs to the bacterial ribosomal protein bS16 family.

Its subcellular location is the plastid. It localises to the chloroplast. In Atropa belladonna (Belladonna), this protein is Small ribosomal subunit protein bS16c.